The chain runs to 314 residues: 2,3-dihydroxyphenylpropionate/2,3-dihydroxicinnamic acid 1,2-dioxygenase (314 aa).

H115 functions as the Proton donor in the catalytic mechanism. H179 acts as the Proton acceptor in catalysis.

The protein belongs to the LigB/MhpB extradiol dioxygenase family. Homotetramer. Fe(2+) is required as a cofactor.

It carries out the reaction 3-(2,3-dihydroxyphenyl)propanoate + O2 = (2Z,4E)-2-hydroxy-6-oxonona-2,4-dienedioate + H(+). The enzyme catalyses (2E)-3-(2,3-dihydroxyphenyl)prop-2-enoate + O2 = (2Z,4E,7E)-2-hydroxy-6-oxonona-2,4,7-trienedioate + H(+). It participates in aromatic compound metabolism; 3-phenylpropanoate degradation. In terms of biological role, catalyzes the non-heme iron(II)-dependent oxidative cleavage of 2,3-dihydroxyphenylpropionic acid and 2,3-dihydroxicinnamic acid into 2-hydroxy-6-ketononadienedioate and 2-hydroxy-6-ketononatrienedioate, respectively. This is 2,3-dihydroxyphenylpropionate/2,3-dihydroxicinnamic acid 1,2-dioxygenase from Rhodococcus globerulus.